Reading from the N-terminus, the 252-residue chain is Imidazole glycerol phosphate synthase subunit HisF (252 aa).

Active-site residues include D11 and D130.

This sequence belongs to the HisA/HisF family. In terms of assembly, heterodimer of HisH and HisF.

It is found in the cytoplasm. It catalyses the reaction 5-[(5-phospho-1-deoxy-D-ribulos-1-ylimino)methylamino]-1-(5-phospho-beta-D-ribosyl)imidazole-4-carboxamide + L-glutamine = D-erythro-1-(imidazol-4-yl)glycerol 3-phosphate + 5-amino-1-(5-phospho-beta-D-ribosyl)imidazole-4-carboxamide + L-glutamate + H(+). Its pathway is amino-acid biosynthesis; L-histidine biosynthesis; L-histidine from 5-phospho-alpha-D-ribose 1-diphosphate: step 5/9. Its function is as follows. IGPS catalyzes the conversion of PRFAR and glutamine to IGP, AICAR and glutamate. The HisF subunit catalyzes the cyclization activity that produces IGP and AICAR from PRFAR using the ammonia provided by the HisH subunit. The chain is Imidazole glycerol phosphate synthase subunit HisF from Thermococcus kodakarensis (strain ATCC BAA-918 / JCM 12380 / KOD1) (Pyrococcus kodakaraensis (strain KOD1)).